A 214-amino-acid polypeptide reads, in one-letter code: MADS-box protein SOC1 (214 aa).

Residues 3 to 57 (RGKTQMKRIENATSRQVTFSKRRNGLLKKAFELSVLCDAEVSLIIFSPKGKLYEF) enclose the MADS-box domain. A K-box domain is found at 87 to 177 (MQHLKYEAAN…SEKWGSHESE (91 aa)). Over residues 162–177 (AENEKLSEKWGSHESE) the composition is skewed to basic and acidic residues. The interval 162-214 (AENEKLSEKWGSHESEVWSNKNQESTGRGDEESSPSSEVETQLFIGLPCSSRK) is disordered. Residues 178–187 (VWSNKNQEST) show a composition bias toward polar residues.

As to quaternary structure, forms a heterodimer with AGL24 through MADS-box domain. Interacts with AGL15, AGL16 and AGL19. Interacts with OXS3 in the nucleus. In terms of tissue distribution, widely expressed. Not found in the apical meristem of short-day grown plants in vegetative stage.

It is found in the nucleus. The protein localises to the cytoplasm. In terms of biological role, transcription activator active in flowering time control. May integrate signals from the photoperiod, vernalization and autonomous floral induction pathways. Can modulate class B and C homeotic genes expression. When associated with AGL24, mediates effect of gibberellins on flowering under short-day conditions, and regulates the expression of LEAFY (LFY), which links floral induction and floral development. The polypeptide is MADS-box protein SOC1 (Arabidopsis thaliana (Mouse-ear cress)).